The primary structure comprises 418 residues: Hepatic and glial cell adhesion molecule (418 aa).

An N-terminal signal peptide occupies residues 1–33 (MKREREAPSRAFSALRLAPFVYLLLIQTEPLEG). The region spanning 34 to 141 (VNITSPVRLI…TGEKTINLTV (108 aa)) is the Ig-like V-type domain. Topologically, residues 34–240 (VNITSPVRLI…VKITVYRRSS (207 aa)) are extracellular. 4 N-linked (GlcNAc...) asparagine glycosylation sites follow: N35, N138, N167, and N189. The region spanning 148–234 (PQVLVASTTV…QGRSPPVKIT (87 aa)) is the Ig-like C2-type domain. The cysteines at positions 168 and 217 are disulfide-linked. A helical transmembrane segment spans residues 241–261 (LYIILSTGGIFLLVTLVTVCA). Residues 262–418 (CWKPSKKSGK…DEAGPVEISA (157 aa)) are Cytoplasmic-facing. Residues 271–418 (KKRKLEKQNS…DEAGPVEISA (148 aa)) are disordered. S280 carries the post-translational modification Phosphoserine. The span at 287–308 (SDDRLKPEADTLPRSGEQERKN) shows a compositional bias: basic and acidic residues. A phosphoserine mark is found at S352 and S379. Residues 385–400 (GSPGRSRSASRTLRTA) show a composition bias toward low complexity.

In terms of assembly, homodimer. Dimer formation occurs predominantly through cis interactions on the cell surface. Part of a complex containing MLC1, TRPV4, AQP4 and ATP1B1. Interacts with CLCN2. Post-translationally, N-glycosylated.

It is found in the cytoplasm. It localises to the cell membrane. Involved in regulating cell motility and cell-matrix interactions. May inhibit cell growth through suppression of cell proliferation. In glia, associates and targets CLCN2 at astrocytic processes and myelinated fiber tracts where it may regulate transcellular chloride flux involved in neuron excitability. This chain is Hepatic and glial cell adhesion molecule, found in Bos taurus (Bovine).